Here is a 269-residue protein sequence, read N- to C-terminus: Trans-aconitate 2-methyltransferase (269 aa).

This sequence belongs to the methyltransferase superfamily. Tam family.

The protein localises to the cytoplasm. The catalysed reaction is trans-aconitate + S-adenosyl-L-methionine = (E)-3-(methoxycarbonyl)pent-2-enedioate + S-adenosyl-L-homocysteine. Functionally, catalyzes the S-adenosylmethionine monomethyl esterification of trans-aconitate. This Streptomyces avermitilis (strain ATCC 31267 / DSM 46492 / JCM 5070 / NBRC 14893 / NCIMB 12804 / NRRL 8165 / MA-4680) protein is Trans-aconitate 2-methyltransferase.